Here is a 329-residue protein sequence, read N- to C-terminus: DNA-directed RNA polymerase subunit alpha (329 aa).

The tract at residues 1–231 (MQTNLLKPKT…EQLAVFAQLE (231 aa)) is alpha N-terminal domain (alpha-NTD). Residues 249-329 (FDPILLRPVD…SWPPAGLDKR (81 aa)) are alpha C-terminal domain (alpha-CTD).

This sequence belongs to the RNA polymerase alpha chain family. As to quaternary structure, homodimer. The RNAP catalytic core consists of 2 alpha, 1 beta, 1 beta' and 1 omega subunit. When a sigma factor is associated with the core the holoenzyme is formed, which can initiate transcription.

The catalysed reaction is RNA(n) + a ribonucleoside 5'-triphosphate = RNA(n+1) + diphosphate. Its function is as follows. DNA-dependent RNA polymerase catalyzes the transcription of DNA into RNA using the four ribonucleoside triphosphates as substrates. The polypeptide is DNA-directed RNA polymerase subunit alpha (Polaromonas sp. (strain JS666 / ATCC BAA-500)).